Here is a 271-residue protein sequence, read N- to C-terminus: 4-hydroxy-tetrahydrodipicolinate reductase (271 aa).

NAD(+)-binding positions include 11–16, Glu-37, 102–104, and 126–129; these read GAAGRM, GTT, and AGNM. Catalysis depends on His-159, which acts as the Proton donor/acceptor. Residue His-160 coordinates (S)-2,3,4,5-tetrahydrodipicolinate. Lys-163 (proton donor) is an active-site residue. Residue 169-170 participates in (S)-2,3,4,5-tetrahydrodipicolinate binding; that stretch reads GT.

It belongs to the DapB family.

It is found in the cytoplasm. The catalysed reaction is (S)-2,3,4,5-tetrahydrodipicolinate + NAD(+) + H2O = (2S,4S)-4-hydroxy-2,3,4,5-tetrahydrodipicolinate + NADH + H(+). The enzyme catalyses (S)-2,3,4,5-tetrahydrodipicolinate + NADP(+) + H2O = (2S,4S)-4-hydroxy-2,3,4,5-tetrahydrodipicolinate + NADPH + H(+). It functions in the pathway amino-acid biosynthesis; L-lysine biosynthesis via DAP pathway; (S)-tetrahydrodipicolinate from L-aspartate: step 4/4. In terms of biological role, catalyzes the conversion of 4-hydroxy-tetrahydrodipicolinate (HTPA) to tetrahydrodipicolinate. This is 4-hydroxy-tetrahydrodipicolinate reductase from Parvibaculum lavamentivorans (strain DS-1 / DSM 13023 / NCIMB 13966).